We begin with the raw amino-acid sequence, 178 residues long: Glucagon-1 (178 aa).

A signal peptide spans 1–21 (MFGIHSLAGVLLLVIVQRQLA). 3 consecutive propeptides follow at residues 83 to 87 (SGAPS), 123 to 134 (ESAEESRNGPMS), and 171 to 178 (SNKRQEDH).

This sequence belongs to the glucagon family.

Its subcellular location is the secreted. In terms of biological role, promotes hydrolysis of glycogen and lipids, and raises the blood sugar level. The sequence is that of Glucagon-1 (gcg1) from Oncorhynchus mykiss (Rainbow trout).